Here is a 1091-residue protein sequence, read N- to C-terminus: TATA element modulatory factor (1091 aa).

2 disordered regions span residues 42-86 (IPYG…KPVR) and 100-280 (FLSP…DAKS). Polar residues predominate over residues 57–81 (WDTSTWGLNSTSSEPQSPPTASQAI). Phosphoserine is present on residues Ser-73, Ser-78, Ser-112, and Ser-136. Composition is skewed to low complexity over residues 111–122 (KSPVVSKPPSKS), 131–142 (SSLQESSSPGQS), and 194–211 (SENV…TTST). Ser-213 carries the phosphoserine modification. Residues 217–234 (ETKDMALEPKEQKHEDRQ) show a composition bias toward basic and acidic residues. 2 stretches are compositionally biased toward low complexity: residues 242–253 (VSSFSSGTSTTS) and 264–273 (ISESSASSRQ). Phosphoserine occurs at positions 324, 326, 329, 334, 340, and 357. Residues 329–338 (SLDSRSVSEI) are interaction with Elongin BC complex. Positions 360-443 (TPKTKVVEST…NQPKAPPEKE (84 aa)) are disordered. Over residues 368–379 (STEENAEEEEGN) the composition is skewed to acidic residues. 2 positions are modified to phosphoserine: Ser-411 and Ser-540. Coiled-coil stretches lie at residues 443–767 (EDVC…STAR) and 824–894 (IQMS…SQLE). A phosphoserine mark is found at Ser-923 and Ser-926. The residue at position 927 (Thr-927) is a Phosphothreonine. The residue at position 931 (Ser-931) is a Phosphoserine. A coiled-coil region spans residues 984–1090 (IENLQSQLKL…QIDELLRQRL (107 aa)).

In terms of assembly, component of the SNF/SWI transcription factor complexes. Interacts with RAB6A. Interacts with TCEB1. Interacts with STAT3 and FER. Interacts with TRNP1; may regulate TRNP1 proteasomal degradation. In terms of processing, phosphorylated by FER.

It localises to the cytoplasm. Its subcellular location is the nucleus. The protein resides in the golgi apparatus membrane. Its function is as follows. Potential coactivator of the androgen receptor. May play critical roles in two RAB6-dependent retrograde transport processes: one from endosomes to the Golgi and the other from the Golgi to the ER. Mediates STAT3 degradation. This is TATA element modulatory factor (Tmf1) from Mus musculus (Mouse).